We begin with the raw amino-acid sequence, 1434 residues long: Ankyrin and armadillo repeat-containing protein (1434 aa).

A helical transmembrane segment spans residues 309-329; sequence IRRGIGYLKLICFLIPFLLSL. ANK repeat units lie at residues 532-561, 569-598, 602-631, 638-667, and 671-701; these read AGYTIFHHAALHNRVSIICQLCNANFKVNQ, QGPTPLHLAAQACSLETTVCLLCSKADYTL, RGWMPIHFAAFYDNVCIIIALCRKDPSLLE, NQCTPLLLAATSGALDTIQYLFSIGANWRK, and KGNNIIHLSVLTFHTEVLKYIIKLNIPELPV. ARM repeat units follow at residues 732–771, 773–812, 814–852, 855–894, 897–936, and 1072–1112; these read DQYWRCILDAGTIPALINLLKSSKIKLQCKTVGLLSNIST, KSAVHALVEAGGIPSLINLLVCDEPEVHSRCAVILYDIAQ, ENKDVIAKYNGIPSLINLLNLNIENVLVNVMNCIRVLCI, ENNQRAVREHKGLPYLIRFLSSDSDVLKAVSSAAIAEVGR, KEIQDAIAMEGAIPPLVALFKGKQISVQMKGAMAVESLAS, and PVSQ…CIVL.

In terms of tissue distribution, ubiquitously expressed with highest level in pancreas and lowest in skeletal muscle.

The protein localises to the membrane. This is Ankyrin and armadillo repeat-containing protein (ANKAR) from Homo sapiens (Human).